Consider the following 711-residue polypeptide: MTTKNLLVELFVEELPPKALKKLGDAFAGVLAEQLKALGLATAESVVTAYASPRRLAAHISHVWLKADDKAVQQKLMPVSVGLDSAGHATPALLKRLQALGADLSDPVAAVAALKRAPDGKAEALFYNSLVTGATLDTGLQKALEEAIAKLPIPKVMSYQLETDCELPGWTSVNFVRPAHGLVALHGSTVVPVKVLGLKAGNSTRGHRFEAAVDPVVLADADSYAVTLEIDGAVIASFAQRKAEIARQLAEAAAELGGGVQPIEDDALLDEVTALVERPNVLVCEFEKEFLDVPQECLILTMKANQKYFPLLDAAGKLTNKFLVVSNISPEDASFVIGGNERVVRPRLADAKFFFDQDRKRTLASRVEGLGKVVYHNKLGTQGERTERVAEIAVKIAQLLEGDALAGKAGKAAWLAKADLLTDMVGEFPELQGTMGRYYALHDGHSAEIAAAIEDHYKPRFAGDELPRNPVGVVVALADKLETLVGMFGIGNLPTGDKDPFALRRHALGVIRMLVEKDLPLDLGALVGGAAPVFGDKITDATPALLDFIYDRLSGSLREQGYSAQEVDSVVSQKPQRLGDVPKRLAAVRAFAALPEAPALAAANKRIGNILKKEALEVDPHVSELLLREAAEIALYAAMRDVVPTANAQFDTGDYTASLQTLAALRAPVDAFFDGVMVNAEELDLRLNRQGLLKSLHNAMNRVADLSRLVA.

The protein belongs to the class-II aminoacyl-tRNA synthetase family. In terms of assembly, tetramer of two alpha and two beta subunits.

The protein resides in the cytoplasm. It carries out the reaction tRNA(Gly) + glycine + ATP = glycyl-tRNA(Gly) + AMP + diphosphate. The polypeptide is Glycine--tRNA ligase beta subunit (Polaromonas naphthalenivorans (strain CJ2)).